We begin with the raw amino-acid sequence, 208 residues long: Nascent polypeptide-associated complex subunit alpha (208 aa).

Basic and acidic residues predominate over residues 1–19 (MSSSRIEELPDDDVPKTTV). 2 disordered regions span residues 1–50 (MSSS…HSRN) and 120–166 (QLAA…VFDA). Positions 21-34 (DAADSSESEVEGAE) are enriched in acidic residues. Positions 48-113 (SRNEKKARKA…AKIEDLNSQA (66 aa)) constitute an NAC-A/B domain. The span at 120 to 131 (QLAAAEAAGSNE) shows a compositional bias: low complexity. Positions 132–154 (HAGHDHASHDHGKGKAVESADKK) are enriched in basic and acidic residues. Over residues 155–164 (DEEEDDEEVF) the composition is skewed to acidic residues. In terms of domain architecture, UBA spans 169 to 208 (LEAKDIELVMAQASVSRNKAIKALKENDNDIVNSIMALSV).

This sequence belongs to the NAC-alpha family. As to quaternary structure, part of the nascent polypeptide-associated complex (NAC), consisting of EGD2 and EGD1. NAC associates with ribosomes via EGD1.

The protein localises to the cytoplasm. Its subcellular location is the nucleus. Functionally, component of the nascent polypeptide-associated complex (NAC), a dynamic component of the ribosomal exit tunnel, protecting the emerging polypeptides from interaction with other cytoplasmic proteins to ensure appropriate nascent protein targeting. The NAC complex also promotes mitochondrial protein import by enhancing productive ribosome interactions with the outer mitochondrial membrane and blocks the inappropriate interaction of ribosomes translating non-secretory nascent polypeptides with translocation sites in the membrane of the endoplasmic reticulum. EGD2 may also be involved in transcription regulation. The protein is Nascent polypeptide-associated complex subunit alpha (EGD2) of Ajellomyces capsulatus (strain NAm1 / WU24) (Darling's disease fungus).